A 166-amino-acid chain; its full sequence is 2-C-methyl-D-erythritol 2,4-cyclodiphosphate synthase (166 aa).

The a divalent metal cation site is built by Asp11 and His13. Residues 11–13 and 40–41 contribute to the 4-CDP-2-C-methyl-D-erythritol 2-phosphate site; these read DVH and HS. An a divalent metal cation-binding site is contributed by His48. 4-CDP-2-C-methyl-D-erythritol 2-phosphate is bound by residues 62–64, 135–138, Phe142, and Arg145; these read DLG and TTSD.

Belongs to the IspF family. In terms of assembly, homotrimer. Requires a divalent metal cation as cofactor.

The catalysed reaction is 4-CDP-2-C-methyl-D-erythritol 2-phosphate = 2-C-methyl-D-erythritol 2,4-cyclic diphosphate + CMP. The protein operates within isoprenoid biosynthesis; isopentenyl diphosphate biosynthesis via DXP pathway; isopentenyl diphosphate from 1-deoxy-D-xylulose 5-phosphate: step 4/6. Involved in the biosynthesis of isopentenyl diphosphate (IPP) and dimethylallyl diphosphate (DMAPP), two major building blocks of isoprenoid compounds. Catalyzes the conversion of 4-diphosphocytidyl-2-C-methyl-D-erythritol 2-phosphate (CDP-ME2P) to 2-C-methyl-D-erythritol 2,4-cyclodiphosphate (ME-CPP) with a corresponding release of cytidine 5-monophosphate (CMP). This chain is 2-C-methyl-D-erythritol 2,4-cyclodiphosphate synthase, found in Pseudarthrobacter chlorophenolicus (strain ATCC 700700 / DSM 12829 / CIP 107037 / JCM 12360 / KCTC 9906 / NCIMB 13794 / A6) (Arthrobacter chlorophenolicus).